The chain runs to 415 residues: Gamma-glutamyl phosphate reductase (415 aa).

This sequence belongs to the gamma-glutamyl phosphate reductase family.

The protein resides in the cytoplasm. The catalysed reaction is L-glutamate 5-semialdehyde + phosphate + NADP(+) = L-glutamyl 5-phosphate + NADPH + H(+). It participates in amino-acid biosynthesis; L-proline biosynthesis; L-glutamate 5-semialdehyde from L-glutamate: step 2/2. Its function is as follows. Catalyzes the NADPH-dependent reduction of L-glutamate 5-phosphate into L-glutamate 5-semialdehyde and phosphate. The product spontaneously undergoes cyclization to form 1-pyrroline-5-carboxylate. This is Gamma-glutamyl phosphate reductase from Listeria monocytogenes serotype 4b (strain F2365).